Here is a 390-residue protein sequence, read N- to C-terminus: MCNNEAKMSELLSVQSDAPAKKINLMDLTRQQMREFFKELGEKPFRADQLVKWIYHFGEDNFDNMTNINKKLREKLKAVAEIKAPEVAVEQRSADGTIKWAMQVGEQQVETVYIPEADRATLCVSSQVGCALACTFCSTAQQGFNRNLTVSEIIGQVWRASKIIGNFGVTGVRPITNVVMMGMGEPLLNVANVVPAMEIMLDDFAYGLSKRRVTLSTSGVVPALDNLSKMIDVALAISLHAPNDELRDEIVPINKKYNIKTLIDSVNRYLNVSNANHGKVTIEYVMLDHVNDGIEHAHQLAEVLKNTPCKINLIPWNPFPEAPYAKSSNTRIDRFQKTLMEYGFTVIIRKTRGDDIDAACGQLAGDVIDRTKRTAMKRQFGQNIGVTEVN.

The active-site Proton acceptor is glutamate 110. The Radical SAM core domain occupies 116-355 (EADRATLCVS…VIIRKTRGDD (240 aa)). An intrachain disulfide couples cysteine 123 to cysteine 360. [4Fe-4S] cluster contacts are provided by cysteine 130, cysteine 134, and cysteine 137. S-adenosyl-L-methionine is bound by residues 184–185 (GE), serine 216, 238–240 (SLH), and asparagine 317. Cysteine 360 acts as the S-methylcysteine intermediate in catalysis.

The protein belongs to the radical SAM superfamily. RlmN family. It depends on [4Fe-4S] cluster as a cofactor.

It localises to the cytoplasm. The catalysed reaction is adenosine(2503) in 23S rRNA + 2 reduced [2Fe-2S]-[ferredoxin] + 2 S-adenosyl-L-methionine = 2-methyladenosine(2503) in 23S rRNA + 5'-deoxyadenosine + L-methionine + 2 oxidized [2Fe-2S]-[ferredoxin] + S-adenosyl-L-homocysteine. It catalyses the reaction adenosine(37) in tRNA + 2 reduced [2Fe-2S]-[ferredoxin] + 2 S-adenosyl-L-methionine = 2-methyladenosine(37) in tRNA + 5'-deoxyadenosine + L-methionine + 2 oxidized [2Fe-2S]-[ferredoxin] + S-adenosyl-L-homocysteine. Its function is as follows. Specifically methylates position 2 of adenine 2503 in 23S rRNA and position 2 of adenine 37 in tRNAs. m2A2503 modification seems to play a crucial role in the proofreading step occurring at the peptidyl transferase center and thus would serve to optimize ribosomal fidelity. This is Dual-specificity RNA methyltransferase RlmN from Haemophilus influenzae (strain 86-028NP).